The sequence spans 42 residues: Cytochrome b6-f complex subunit 7 (42 aa).

A helical membrane pass occupies residues 15–35; the sequence is IVTAAVTCIFMVLFGLSLGFA.

The protein belongs to the PetM family. The 4 large subunits of the cytochrome b6-f complex are cytochrome b6, subunit IV (17 kDa polypeptide, PetD), cytochrome f and the Rieske protein, while the 4 small subunits are PetG, PetL, PetM and PetN. The complex functions as a dimer.

It localises to the plastid. It is found in the chloroplast thylakoid membrane. Its function is as follows. Component of the cytochrome b6-f complex, which mediates electron transfer between photosystem II (PSII) and photosystem I (PSI), cyclic electron flow around PSI, and state transitions. This is Cytochrome b6-f complex subunit 7 from Trieres chinensis (Marine centric diatom).